The chain runs to 192 residues: Peptidyl-tRNA hydrolase (192 aa).

Tyrosine 17 contributes to the tRNA binding site. Histidine 22 acts as the Proton acceptor in catalysis. 3 residues coordinate tRNA: tyrosine 68, asparagine 70, and asparagine 116.

The protein belongs to the PTH family. In terms of assembly, monomer.

The protein resides in the cytoplasm. It carries out the reaction an N-acyl-L-alpha-aminoacyl-tRNA + H2O = an N-acyl-L-amino acid + a tRNA + H(+). Functionally, hydrolyzes ribosome-free peptidyl-tRNAs (with 1 or more amino acids incorporated), which drop off the ribosome during protein synthesis, or as a result of ribosome stalling. Its function is as follows. Catalyzes the release of premature peptidyl moieties from peptidyl-tRNA molecules trapped in stalled 50S ribosomal subunits, and thus maintains levels of free tRNAs and 50S ribosomes. The chain is Peptidyl-tRNA hydrolase from Mycolicibacterium vanbaalenii (strain DSM 7251 / JCM 13017 / BCRC 16820 / KCTC 9966 / NRRL B-24157 / PYR-1) (Mycobacterium vanbaalenii).